We begin with the raw amino-acid sequence, 117 residues long: Large ribosomal subunit protein bL20 (117 aa).

The protein belongs to the bacterial ribosomal protein bL20 family.

Its function is as follows. Binds directly to 23S ribosomal RNA and is necessary for the in vitro assembly process of the 50S ribosomal subunit. It is not involved in the protein synthesizing functions of that subunit. The protein is Large ribosomal subunit protein bL20 of Mesomycoplasma hyopneumoniae (strain 7448) (Mycoplasma hyopneumoniae).